A 53-amino-acid polypeptide reads, in one-letter code: Light-harvesting protein B800/850/890 beta-1 chain (53 aa).

At 1–19 the chain is on the cytoplasmic side; sequence ADNMSLTGLSDEEAKEFHS. The a bacteriochlorophyll site is built by histidine 18 and histidine 36. A helical membrane pass occupies residues 20 to 42; the sequence is IFMQSFLIFTAVAVVAHFLAWAW. The Periplasmic portion of the chain corresponds to 43–53; sequence RPWIPGAEGYG.

Belongs to the antenna complex beta subunit family. The core complex is formed by different alpha and beta chains, binding bacteriochlorophyll molecules, and arranged most probably in tetrameric structures disposed around the reaction center. The non-pigmented gamma chains may constitute additional components.

The protein resides in the cell inner membrane. Functionally, antenna complexes are light-harvesting systems, which transfer the excitation energy to the reaction centers. This Halorhodospira halophila (strain DSM 244 / SL1) (Ectothiorhodospira halophila (strain DSM 244 / SL1)) protein is Light-harvesting protein B800/850/890 beta-1 chain.